Here is a 466-residue protein sequence, read N- to C-terminus: Argininosuccinate lyase (466 aa).

The protein belongs to the lyase 1 family. Argininosuccinate lyase subfamily.

The protein localises to the cytoplasm. It carries out the reaction 2-(N(omega)-L-arginino)succinate = fumarate + L-arginine. The protein operates within amino-acid biosynthesis; L-arginine biosynthesis; L-arginine from L-ornithine and carbamoyl phosphate: step 3/3. The protein is Argininosuccinate lyase of Synechococcus sp. (strain ATCC 27144 / PCC 6301 / SAUG 1402/1) (Anacystis nidulans).